We begin with the raw amino-acid sequence, 135 residues long: Mu-like prophage FluMu protein gp46 (135 aa).

This sequence to phage Mu protein gp46.

This chain is Mu-like prophage FluMu protein gp46, found in Haemophilus influenzae (strain ATCC 51907 / DSM 11121 / KW20 / Rd).